The sequence spans 413 residues: Pyruvate dehydrogenase complex subunit homolog DDB_G0271564, mitochondrial (413 aa).

Residues 1–19 constitute a mitochondrion transit peptide; sequence MNRILKQVSNTKGKGIRFY. The region spanning 29–67 is the Peripheral subunit-binding (PSBD) domain; the sequence is YMFPSVRRLLVEYGINSSKEVTATGPQNRLLKGDVLAYI.

This sequence belongs to the 2-oxoacid dehydrogenase family.

It localises to the mitochondrion. Functionally, the pyruvate dehydrogenase complex catalyzes the overall conversion of pyruvate to acetyl-CoA and CO(2). It contains multiple copies of three enzymatic components: pyruvate dehydrogenase (E1), dihydrolipoamide acetyltransferase (E2) and lipoamide dehydrogenase (E3). The chain is Pyruvate dehydrogenase complex subunit homolog DDB_G0271564, mitochondrial (pdhX) from Dictyostelium discoideum (Social amoeba).